The sequence spans 281 residues: DegV domain-containing protein YqaC (281 aa).

Residues 3–279 enclose the DegV domain; sequence LAVITDSSAD…LNTVAYGISP (277 aa). The hexadecanoate site is built by Thr-60 and Ser-93.

Its function is as follows. May bind long-chain fatty acids, such as palmitate, and may play a role in lipid transport or fatty acid metabolism. The polypeptide is DegV domain-containing protein YqaC (yqaC) (Lactococcus lactis subsp. lactis (strain IL1403) (Streptococcus lactis)).